The sequence spans 340 residues: Anthranilate phosphoribosyltransferase (340 aa).

5-phospho-alpha-D-ribose 1-diphosphate is bound by residues G80, 83–84, T88, 90–93, 108–116, and S120; these read GD, NIST, and KHGNRAMSS. Residue G80 participates in anthranilate binding. S92 contacts Mg(2+). N111 provides a ligand contact to anthranilate. R166 contributes to the anthranilate binding site. Mg(2+)-binding residues include D225 and E226.

The protein belongs to the anthranilate phosphoribosyltransferase family. As to quaternary structure, homodimer. Mg(2+) serves as cofactor.

It catalyses the reaction N-(5-phospho-beta-D-ribosyl)anthranilate + diphosphate = 5-phospho-alpha-D-ribose 1-diphosphate + anthranilate. It functions in the pathway amino-acid biosynthesis; L-tryptophan biosynthesis; L-tryptophan from chorismate: step 2/5. In terms of biological role, catalyzes the transfer of the phosphoribosyl group of 5-phosphorylribose-1-pyrophosphate (PRPP) to anthranilate to yield N-(5'-phosphoribosyl)-anthranilate (PRA). The protein is Anthranilate phosphoribosyltransferase of Roseiflexus castenholzii (strain DSM 13941 / HLO8).